The following is a 146-amino-acid chain: Basic phospholipase A2 73 (146 aa).

The signal sequence occupies residues 1–19 (MYPAHLLVLLAVCVSLLGA). Residues 20–27 (ASIPPLPL) constitute a propeptide that is removed on maturation. 7 disulfide bridges follow: Cys-38–Cys-98, Cys-54–Cys-145, Cys-56–Cys-72, Cys-71–Cys-126, Cys-78–Cys-119, Cys-87–Cys-112, and Cys-105–Cys-117. Ca(2+) is bound by residues Tyr-55, Gly-57, and Gly-59. The active site involves His-75. Asp-76 contacts Ca(2+). Asp-120 is a catalytic residue.

It belongs to the phospholipase A2 family. Group I subfamily. D49 sub-subfamily. It depends on Ca(2+) as a cofactor. As to expression, expressed by the venom gland.

It is found in the secreted. The enzyme catalyses a 1,2-diacyl-sn-glycero-3-phosphocholine + H2O = a 1-acyl-sn-glycero-3-phosphocholine + a fatty acid + H(+). Its function is as follows. Snake venom phospholipase A2 (PLA2) that inhibits neuromuscular transmission by blocking acetylcholine release from the nerve termini. PLA2 catalyzes the calcium-dependent hydrolysis of the 2-acyl groups in 3-sn-phosphoglycerides. The protein is Basic phospholipase A2 73 of Hydrophis hardwickii (Hardwick's spine-bellied seasnake).